Consider the following 172-residue polypeptide: Lipopolysaccharide export system protein LptA (172 aa).

Residues 1-23 form the signal peptide; that stretch reads MKLVSNKILFLATMVLASSSAFA.

This sequence belongs to the LptA family. As to quaternary structure, component of the lipopolysaccharide transport and assembly complex.

The protein resides in the periplasm. In terms of biological role, involved in the assembly of lipopolysaccharide (LPS). Required for the translocation of LPS from the inner membrane to the outer membrane. May form a bridge between the inner membrane and the outer membrane, via interactions with LptC and LptD, thereby facilitating LPS transfer across the periplasm. In Haemophilus influenzae (strain ATCC 51907 / DSM 11121 / KW20 / Rd), this protein is Lipopolysaccharide export system protein LptA.